The following is a 360-amino-acid chain: Histidinol-phosphate aminotransferase (360 aa).

Position 222 is an N6-(pyridoxal phosphate)lysine (Lys-222).

The protein belongs to the class-II pyridoxal-phosphate-dependent aminotransferase family. Histidinol-phosphate aminotransferase subfamily. In terms of assembly, homodimer. Requires pyridoxal 5'-phosphate as cofactor.

The catalysed reaction is L-histidinol phosphate + 2-oxoglutarate = 3-(imidazol-4-yl)-2-oxopropyl phosphate + L-glutamate. Its pathway is amino-acid biosynthesis; L-histidine biosynthesis; L-histidine from 5-phospho-alpha-D-ribose 1-diphosphate: step 7/9. In Listeria welshimeri serovar 6b (strain ATCC 35897 / DSM 20650 / CCUG 15529 / CIP 8149 / NCTC 11857 / SLCC 5334 / V8), this protein is Histidinol-phosphate aminotransferase.